The chain runs to 318 residues: Myeloid-associated differentiation marker (318 aa).

2 consecutive MARVEL domains span residues 25 to 157 (ALTQ…ARPG) and 162 to 315 (YMAT…RLVF). The next 8 helical transmembrane spans lie at 35-55 (LLQL…GAWT), 58-78 (MGNW…IILI), 95-115 (FPIT…IIYP), 131-151 (AIAA…EVAW), 165-185 (TVPG…FAFI), 197-217 (LEWC…TVLL), 233-253 (FLSG…VLWP), and 290-310 (LAVS…LVYS).

The protein belongs to the MAL family.

It localises to the membrane. The polypeptide is Myeloid-associated differentiation marker (Myadm) (Rattus norvegicus (Rat)).